A 341-amino-acid chain; its full sequence is Anthranilate phosphoribosyltransferase (341 aa).

Residues G79, 82-83, T87, 89-92, 107-115, and S119 contribute to the 5-phospho-alpha-D-ribose 1-diphosphate site; these read GD, NIST, and KHGNRAVSS. Residue G79 coordinates anthranilate. S91 contributes to the Mg(2+) binding site. Position 110 (N110) interacts with anthranilate. R165 provides a ligand contact to anthranilate. The Mg(2+) site is built by D224 and E225.

Belongs to the anthranilate phosphoribosyltransferase family. In terms of assembly, homodimer. Mg(2+) is required as a cofactor.

It carries out the reaction N-(5-phospho-beta-D-ribosyl)anthranilate + diphosphate = 5-phospho-alpha-D-ribose 1-diphosphate + anthranilate. It functions in the pathway amino-acid biosynthesis; L-tryptophan biosynthesis; L-tryptophan from chorismate: step 2/5. Catalyzes the transfer of the phosphoribosyl group of 5-phosphorylribose-1-pyrophosphate (PRPP) to anthranilate to yield N-(5'-phosphoribosyl)-anthranilate (PRA). In Bacillus mycoides (strain KBAB4) (Bacillus weihenstephanensis), this protein is Anthranilate phosphoribosyltransferase.